Reading from the N-terminus, the 223-residue chain is Adenylate kinase 4, mitochondrial (223 aa).

15–20 (GSGKGT) lines the a ribonucleoside 5'-triphosphate pocket. Residues 35–64 (SSGHLLRENLKTNTEVGDVAKQYLEKGLLV) are NMP. AMP is bound by residues serine 36 and arginine 41. Lysine 60 bears the N6-succinyllysine mark. AMP-binding positions include 62–64 (LLV), 89–92 (GFPR), and glutamine 96. The LID stretch occupies residues 125–162 (RRWIHPSSGRVYNLDFNPPQVLGVDDITGEPLVQQEDD). A ribonucleoside 5'-triphosphate contacts are provided by residues arginine 126 and 135-136 (VY). Arginine 170 provides a ligand contact to AMP. At lysine 175 the chain carries N6-acetyllysine. N6-acetyllysine; alternate is present on residues lysine 179 and lysine 186. N6-succinyllysine; alternate is present on residues lysine 179 and lysine 186. Threonine 199 serves as a coordination point for a ribonucleoside 5'-triphosphate.

It belongs to the adenylate kinase family. AK3 subfamily. Monomer. Interacts with SLC25A5/ANT2. In terms of tissue distribution, expressed in the pyramidal cells in the hippocampus.

It localises to the mitochondrion matrix. The enzyme catalyses a ribonucleoside 5'-phosphate + ATP = a ribonucleoside 5'-diphosphate + ADP. It catalyses the reaction AMP + ATP = 2 ADP. It carries out the reaction GTP + AMP = GDP + ADP. The catalysed reaction is CMP + ATP = CDP + ADP. The enzyme catalyses GTP + CMP = CDP + GDP. It catalyses the reaction dAMP + ATP = dADP + ADP. It carries out the reaction dCMP + ATP = dCDP + ADP. The catalysed reaction is a 2'-deoxyribonucleoside 5'-diphosphate + ATP = a 2'-deoxyribonucleoside 5'-triphosphate + ADP. The enzyme catalyses a ribonucleoside 5'-diphosphate + ATP = a ribonucleoside 5'-triphosphate + ADP. It catalyses the reaction GDP + ATP = GTP + ADP. It carries out the reaction CDP + GTP = CTP + GDP. The catalysed reaction is CDP + ATP = CTP + ADP. The enzyme catalyses UDP + ATP = UTP + ADP. It catalyses the reaction GTP + UDP = UTP + GDP. It carries out the reaction dADP + GTP = dATP + GDP. The catalysed reaction is dCDP + GTP = dCTP + GDP. The enzyme catalyses dCDP + ATP = dCTP + ADP. It catalyses the reaction dGDP + ATP = dGTP + ADP. It carries out the reaction dTDP + GTP = dTTP + GDP. The catalysed reaction is dTDP + ATP = dTTP + ADP. In terms of biological role, broad-specificity mitochondrial nucleoside phosphate kinase involved in cellular nucleotide homeostasis by catalyzing nucleoside-phosphate interconversions. Similar to other adenylate kinases, preferentially catalyzes the phosphorylation of the nucleoside monophosphate AMP with ATP as phosphate donor to produce ADP. Phosphorylates only AMP when using GTP as phosphate donor. In vitro, can also catalyze the phosphorylation of CMP, dAMP and dCMP and use GTP as an alternate phosphate donor. Moreover, exhibits a diphosphate kinase activity, producing ATP, CTP, GTP, UTP, TTP, dATP, dCTP and dGTP from the corresponding diphosphate substrates with either ATP or GTP as phosphate donors. Plays a role in controlling cellular ATP levels by regulating phosphorylation and activation of the energy sensor protein kinase AMPK. Plays a protective role in the cellular response to oxidative stress. This chain is Adenylate kinase 4, mitochondrial, found in Rattus norvegicus (Rat).